Reading from the N-terminus, the 232-residue chain is V-type ATP synthase subunit E (232 aa).

The protein belongs to the V-ATPase E subunit family.

Produces ATP from ADP in the presence of a proton gradient across the membrane. This is V-type ATP synthase subunit E (atpE) from Treponema pallidum (strain Nichols).